A 333-amino-acid polypeptide reads, in one-letter code: uncharacterized protein (333 aa).

The disordered stretch occupies residues 234-333; it reads PPLAPTSAPA…GLSSEFDSDD (100 aa). Residues 251-265 are compositionally biased toward pro residues; the sequence is VPPPVPAPPTPPPQE. A compositionally biased stretch (polar residues) spans 324–333; sequence GLSSEFDSDD.

The protein localises to the cell projection. It localises to the cilium. It is found in the flagellum. This is an uncharacterized protein from Homo sapiens (Human).